A 438-amino-acid chain; its full sequence is Cyanidin-3-O-glucoside 2-O-glucuronosyltransferase (438 aa).

UDP-alpha-D-glucuronate contacts are provided by residues serine 264, 315 to 316 (WV), 333 to 341 (HCGWSSTME), and 355 to 358 (QFDQ).

The protein belongs to the UDP-glycosyltransferase family. In terms of assembly, monomer. Expressed in petals. Not detected in sepals, stems, leaves, tubular corollas and white petals.

Its subcellular location is the cytoplasm. It carries out the reaction cyanidin 3-O-beta-D-glucoside + UDP-alpha-D-glucuronate = cyanidin 3-O-(2-O-beta-D-glucuronosyl)-beta-D-glucoside + UDP + H(+). With respect to regulation, inhibited by copper, mercury, UDP, UTP and partially by calcium, cadmium, iron and UMP. Not affected by cobalt, magnesium, manganese, zinc, nickel, tin, uridine, sadium malonate and glucose. Functionally, involved in the production of glucuronosylated anthocyanins that are the origin of the red coloration of flowers. Can use cyanidin 3-O-6''-O-malonylglucoside, cyanidin 3-O-glucoside and delphinidin 3-O-glucosideas substrates, but not pelargonidin 3-O-glucoside, cyanidin 3-O-3'',6''-O-dimalonylglucoside, pelargonidin 3,5-O-diglucoside, pelargonidin 3-O-6''-O-malonylglucoside-5-O-glucoside, quercetin 3-O-glucoside, quercetin 3-O-6''-O-malonylglucoside, daidzin, genistin,7-O-6''-O-malonylglucosides of daidzein and genistein, cyanidin, quercetin, daidzein, genistein p-Nitrophenyl beta-D-glucopyranoside, beta-estradiol, 17alpha-estradiol, 1-naphthol, 2-naphthol, 4-methylumbelliferone, and p-nitrophenol. Highly specific for UDP-glucuronate (UDP-GlcUA). Arg-25 is decisive with respect to UDP-sugar specificity. The chain is Cyanidin-3-O-glucoside 2-O-glucuronosyltransferase (UGAT) from Bellis perennis (English daisy).